The following is a 463-amino-acid chain: Maintenance of mitochondrial morphology protein 1-2 (463 aa).

Over 1 to 23 (MVIPAELIQKALKQQSGWGFTEG) the chain is Lumenal. The helical transmembrane segment at 24 to 44 (LVLGQLSVIITVIIILKFVIF) threads the bilayer. Residues 45–463 (AENKSPKKGN…TGADTASGSS (419 aa)) lie on the Cytoplasmic side of the membrane. The segment at 72–152 (GGQTANGVKT…VAGSTSNLAV (81 aa)) is disordered. The span at 108–122 (RPGSSRVSMVRSTSG) shows a compositional bias: polar residues. Positions 205–435 (APESLDWFNV…EPHQMIFILP (231 aa)) constitute an SMP-LTD domain.

This sequence belongs to the MMM1 family. In terms of assembly, homodimer. Component of the ER-mitochondria encounter structure (ERMES) or MDM complex, composed of MMM1, MDM10, MDM12 and MDM34. An MMM1 homodimer associates with one molecule of MDM12 on each side in a pairwise head-to-tail manner, and the SMP-LTD domains of MMM1 and MDM12 generate a continuous hydrophobic tunnel for phospholipid trafficking.

The protein resides in the endoplasmic reticulum membrane. Component of the ERMES/MDM complex, which serves as a molecular tether to connect the endoplasmic reticulum (ER) and mitochondria. Components of this complex are involved in the control of mitochondrial shape and protein biogenesis, and function in nonvesicular lipid trafficking between the ER and mitochondria. The MDM12-MMM1 subcomplex functions in the major beta-barrel assembly pathway that is responsible for biogenesis of all outer membrane beta-barrel proteins, and acts in a late step after the SAM complex. The MDM10-MDM12-MMM1 subcomplex further acts in the TOM40-specific pathway after the action of the MDM12-MMM1 complex. Essential for establishing and maintaining the structure of mitochondria and maintenance of mtDNA nucleoids. This is Maintenance of mitochondrial morphology protein 1-2 from Yarrowia lipolytica (strain CLIB 122 / E 150) (Yeast).